We begin with the raw amino-acid sequence, 102 residues long: Antimicrobial peptide 1 (102 aa).

A signal peptide spans 1–26 (MASTKLFFSVITVMMLIAMASEMVNG). Intrachain disulfides connect Cys-37/Cys-90, Cys-47/Cys-102, and Cys-49/Cys-75.

It is found in the secreted. In terms of biological role, antimicrobial peptide which inhibits the growth of a variety of fungi, oomycetes, Gram-positive bacterial phytopatogenes and S.cerevisiae in vitro. No activity against E.coli. This is Antimicrobial peptide 1 from Macadamia integrifolia (Macadamia nut).